The sequence spans 415 residues: Glycerate 2-kinase (415 aa).

Lysine 57 contacts substrate.

This sequence belongs to the glycerate kinase type-1 family. As to quaternary structure, homodimer. The cofactor is Mg(2+). It depends on Ni(2+) as a cofactor. Mn(2+) serves as cofactor. Requires Co(2+) as cofactor.

The enzyme catalyses (R)-glycerate + ATP = (2R)-2-phosphoglycerate + ADP + H(+). In terms of biological role, catalyzes the ATP-dependent phosphorylation of D-glycerate to 2-phosphoglycerate. It can also partially utilize GTP, CTP or UTP as phosphate donor. This is Glycerate 2-kinase (gck) from Picrophilus torridus (strain ATCC 700027 / DSM 9790 / JCM 10055 / NBRC 100828 / KAW 2/3).